Here is an 887-residue protein sequence, read N- to C-terminus: Pyruvate dehydrogenase E1 component (887 aa).

Mg(2+) is bound by residues Asp231, Asn261, and Gln263. An N6-acetyllysine modification is found at Lys716.

In terms of assembly, homodimer. Part of the PDH complex, consisting of multiple copies of pyruvate dehydrogenase (E1), dihydrolipoamide acetyltransferase (E2) and lipoamide dehydrogenase (E3). Requires Mg(2+) as cofactor. Thiamine diphosphate serves as cofactor.

The enzyme catalyses N(6)-[(R)-lipoyl]-L-lysyl-[protein] + pyruvate + H(+) = N(6)-[(R)-S(8)-acetyldihydrolipoyl]-L-lysyl-[protein] + CO2. Component of the pyruvate dehydrogenase (PDH) complex, that catalyzes the overall conversion of pyruvate to acetyl-CoA and CO(2). The sequence is that of Pyruvate dehydrogenase E1 component (aceE) from Escherichia coli O157:H7.